The following is a 455-amino-acid chain: P2X purinoceptor 5 (455 aa).

The Cytoplasmic portion of the chain corresponds to 1–30 (MGQAAWKGFVLSLFDYKTAKFVVAKSKKVG). A helical membrane pass occupies residues 31 to 50 (LLYRVLQLTILLYLLIWVFL). Over 51–339 (IKKSYQDIDT…KFSIIPTVIN (289 aa)) the chain is Extracellular. An ATP-binding site is contributed by 69-71 (KVK). A glycan (N-linked (GlcNAc...) asparagine) is linked at Asn-77. Cystine bridges form between Cys-118–Cys-169, Cys-129–Cys-152, and Cys-135–Cys-163. N-linked (GlcNAc...) asparagine glycosylation occurs at Asn-157. An ATP-binding site is contributed by Thr-189. A glycan (N-linked (GlcNAc...) asparagine) is linked at Asn-202. 2 disulfides stabilise this stretch: Cys-220/Cys-229 and Cys-263/Cys-272. Residues 294–296 (NFR) and Lys-314 contribute to the ATP site. The helical transmembrane segment at 340–362 (IGSGLALMGAGAFFCDLVLIYLI) threads the bilayer. Residues 363-455 (RKSEFYRDKK…PSQILQTVKT (93 aa)) lie on the Cytoplasmic side of the membrane.

The protein belongs to the P2X receptor family. In terms of assembly, functional P2XRs are organized as homomeric and heteromeric trimers. Homotrimer. Forms heterotrimer with P2RX1. In terms of tissue distribution, expressed in a number of tissues, with highest levels detected in heart and kidney.

It is found in the cell membrane. It catalyses the reaction Na(+)(in) = Na(+)(out). The enzyme catalyses Ca(2+)(in) = Ca(2+)(out). It carries out the reaction chloride(in) = chloride(out). Activated by ATP. Slowly desensitizing. Not activated by ATP agonist alpha/beta-methylene-ATP. Highly sensitive to the antagonists suramin and PPADS. ATP-gated nonselective transmembrane cation channel permeable to potassium, sodium and calcium. Unlike other P2RX receptors, the P2X5 receptor is also permeable to chloride. Acts as an important regulator of inflammatory-related bone loss and osteoclast multinucleation. The sequence is that of P2X purinoceptor 5 from Mus musculus (Mouse).